A 207-amino-acid chain; its full sequence is Gene 66 protein (207 aa).

In Mycobacterium (Mycobacteriophage L5), this protein is Gene 66 protein (66).